A 187-amino-acid polypeptide reads, in one-letter code: Elongation factor P (187 aa).

The protein belongs to the elongation factor P family.

The protein resides in the cytoplasm. The protein operates within protein biosynthesis; polypeptide chain elongation. Its function is as follows. Involved in peptide bond synthesis. Stimulates efficient translation and peptide-bond synthesis on native or reconstituted 70S ribosomes in vitro. Probably functions indirectly by altering the affinity of the ribosome for aminoacyl-tRNA, thus increasing their reactivity as acceptors for peptidyl transferase. This is Elongation factor P from Desulfotalea psychrophila (strain LSv54 / DSM 12343).